The chain runs to 465 residues: Probable oxidoreductase AIM17 (465 aa).

The transit peptide at M1–L16 directs the protein to the mitochondrion. The Fe cation site is built by H246, D248, and H428.

This sequence belongs to the gamma-BBH/TMLD family. Requires Fe(2+) as cofactor. The cofactor is L-ascorbate.

It is found in the mitochondrion. The polypeptide is Probable oxidoreductase AIM17 (AIM17) (Saccharomyces cerevisiae (strain ATCC 204508 / S288c) (Baker's yeast)).